Consider the following 400-residue polypeptide: LIM homeobox transcription factor 1-beta.1 (400 aa).

2 consecutive LIM zinc-binding domains span residues 54–113 and 114–175; these read AVCE…LFAA and KCSG…EKDL. The interval 175-228 is disordered; it reads LLSSGSPDDSDSVKSDDEEGDVKPGKGRVNQGKGSDDGKDPRRPKRPRTILTTQ. Positions 218-277 form a DNA-binding region, homeobox; sequence PKRPRTILTTQQRRAFKASFEVSSKPCRKVRETLAAETGLSVRVVQVWFQNQRAKIKKLA.

As to expression, shows a temporal expression pattern in three main areas: neural, kidney and limbs. From stage 13 onwards, expressed in regions of the nervous system including the placodes and otic vesicles, eye, specific sets of neurons, and in discreet regions of the neural tube. From stage 13, also expressed in the presumptive pronephros, and from stage 27 expression is predominant in the capsule of the pronephric glomus. Also expressed in the developing forelimbs and hindlimbs. In metamorphosing tadpoles, expressed in the eye, brain, muscle and mesonephric kidney.

The protein resides in the nucleus. In terms of biological role, required for early specification of the kidney glomus, lying upstream of wt1 in the pathway controlling glomus differentiation. The balance in levels and expression patterns of binding partners such as lhx1/lim-1 influences differentiation into glomus or tubule derivatives. Involved in specification of serotonergic neurons. The protein is LIM homeobox transcription factor 1-beta.1 of Xenopus laevis (African clawed frog).